We begin with the raw amino-acid sequence, 138 residues long: Hydrogenase maturation factor HypA (138 aa).

Residue His-2 coordinates Ni(2+). Residues Cys-73, Cys-76, Cys-110, and Cys-113 each coordinate Zn(2+).

This sequence belongs to the HypA/HybF family.

Its function is as follows. Involved in the maturation of [NiFe] hydrogenases. Required for nickel insertion into the metal center of the hydrogenase. The chain is Hydrogenase maturation factor HypA from Thermococcus sibiricus (strain DSM 12597 / MM 739).